A 121-amino-acid polypeptide reads, in one-letter code: Large ribosomal subunit protein uL14 (121 aa).

It belongs to the universal ribosomal protein uL14 family. In terms of assembly, part of the 50S ribosomal subunit. Forms a cluster with proteins L3 and L19. In the 70S ribosome, L14 and L19 interact and together make contacts with the 16S rRNA in bridges B5 and B8.

Binds to 23S rRNA. Forms part of two intersubunit bridges in the 70S ribosome. This chain is Large ribosomal subunit protein uL14, found in Akkermansia muciniphila (strain ATCC BAA-835 / DSM 22959 / JCM 33894 / BCRC 81048 / CCUG 64013 / CIP 107961 / Muc).